The chain runs to 532 residues: Muscarinic acetylcholine receptor M5 (532 aa).

Over 1-29 the chain is Extracellular; sequence MEGDSYHNATTVNGTPVNHQPLERHRLWE. A glycan (N-linked (GlcNAc...) asparagine) is linked at Asn-8. A helical membrane pass occupies residues 30–53; that stretch reads VITIAAVTAVVSLITIVGNVLVMI. At 54-66 the chain is on the cytoplasmic side; it reads SFKVNSQLKTVNN. The chain crosses the membrane as a helical span at residues 67-87; that stretch reads YYLLSLACADLIIGIFSMNLY. Residues 88 to 104 lie on the Extracellular side of the membrane; it reads TTYILMGRWALGSLACD. Cys-103 and Cys-183 are disulfide-bonded. The chain crosses the membrane as a helical span at residues 105 to 126; that stretch reads LWLALDYVASNASVMNLLVISF. Topologically, residues 127-146 are cytoplasmic; the sequence is DRYFSITRPLTYRAKRTPKR. A helical transmembrane segment spans residues 147–169; sequence AGIMIGLAWLISFILWAPAILCW. At 170–191 the chain is on the extracellular side; it reads QYLVGKRTVPLDECQIQFLSEP. The chain crosses the membrane as a helical span at residues 192-214; the sequence is TITFGTAIAAFYIPVSVMTILYC. Over 215-443 the chain is Cytoplasmic; it reads RIYRETEKRT…LVKERKAAQT (229 aa). The interval 262–294 is disordered; it reads AQRERNQASWSSSRRSTSTTGKPSQATGPSANW. The segment covering 270–281 has biased composition (low complexity); sequence SWSSSRRSTSTT. Over residues 282–291 the composition is skewed to polar residues; the sequence is GKPSQATGPS. The chain crosses the membrane as a helical span at residues 444–464; it reads LSAILLAFIITWTPYNIMVLV. At 465–478 the chain is on the extracellular side; that stretch reads STFCDKCVPVTLWH. A helical membrane pass occupies residues 479–498; sequence LGYWLCYVNSTVNPICYALC. The Cytoplasmic portion of the chain corresponds to 499–532; it reads NRTFRKTFKMLLLCRWKKKKVEEKLYWQGNSKLP. Residues Thr-501 and Thr-505 each carry the phosphothreonine modification.

Belongs to the G-protein coupled receptor 1 family. Muscarinic acetylcholine receptor subfamily. CHRM5 sub-subfamily.

It is found in the cell membrane. It localises to the postsynaptic cell membrane. Its function is as follows. The muscarinic acetylcholine receptor mediates various cellular responses, including inhibition of adenylate cyclase, breakdown of phosphoinositides and modulation of potassium channels through the action of G proteins. Primary transducing effect is Pi turnover. This is Muscarinic acetylcholine receptor M5 (CHRM5) from Homo sapiens (Human).